Here is a 130-residue protein sequence, read N- to C-terminus: Small ribosomal subunit protein uS9 (130 aa).

The protein belongs to the universal ribosomal protein uS9 family.

The polypeptide is Small ribosomal subunit protein uS9 (Leptothrix cholodnii (strain ATCC 51168 / LMG 8142 / SP-6) (Leptothrix discophora (strain SP-6))).